A 557-amino-acid polypeptide reads, in one-letter code: Urocanate hydratase (557 aa).

Residues 52 to 53 (GG), glutamine 130, 176 to 178 (GMG), glutamate 196, arginine 201, 242 to 243 (NA), 263 to 267 (QTSAH), 273 to 274 (YL), and tyrosine 322 contribute to the NAD(+) site. Cysteine 410 is an active-site residue. Glycine 492 lines the NAD(+) pocket.

This sequence belongs to the urocanase family. The cofactor is NAD(+).

It is found in the cytoplasm. It carries out the reaction 4-imidazolone-5-propanoate = trans-urocanate + H2O. It participates in amino-acid degradation; L-histidine degradation into L-glutamate; N-formimidoyl-L-glutamate from L-histidine: step 2/3. Its function is as follows. Catalyzes the conversion of urocanate to 4-imidazolone-5-propionate. This chain is Urocanate hydratase, found in Pseudoalteromonas translucida (strain TAC 125).